The primary structure comprises 674 residues: Methionine--tRNA ligase (674 aa).

The 'HIGH' region signature appears at 11–21; the sequence is PYANGDLHLGH. Zn(2+)-binding residues include C142, C145, C155, and C158. Positions 330–334 match the 'KMSKS' region motif; the sequence is KMSKS. K333 contacts ATP. Residues 574–674 form the tRNA-binding domain; sequence DFMKVDLRIA…EGAQPGMRVK (101 aa).

It belongs to the class-I aminoacyl-tRNA synthetase family. MetG type 1 subfamily. In terms of assembly, homodimer. The cofactor is Zn(2+).

The protein localises to the cytoplasm. The catalysed reaction is tRNA(Met) + L-methionine + ATP = L-methionyl-tRNA(Met) + AMP + diphosphate. In terms of biological role, is required not only for elongation of protein synthesis but also for the initiation of all mRNA translation through initiator tRNA(fMet) aminoacylation. This is Methionine--tRNA ligase from Francisella tularensis subsp. holarctica (strain FTNF002-00 / FTA).